Consider the following 297-residue polypeptide: Aspartate carbamoyltransferase catalytic subunit (297 aa).

Carbamoyl phosphate is bound by residues Arg-49 and Thr-50. Position 77 (Lys-77) interacts with L-aspartate. Carbamoyl phosphate-binding residues include Arg-99, His-129, and Gln-132. 2 residues coordinate L-aspartate: Arg-162 and Arg-215. Residues Gly-256 and Pro-257 each contribute to the carbamoyl phosphate site.

It belongs to the aspartate/ornithine carbamoyltransferase superfamily. ATCase family. In terms of assembly, heterododecamer (2C3:3R2) of six catalytic PyrB chains organized as two trimers (C3), and six regulatory PyrI chains organized as three dimers (R2).

The enzyme catalyses carbamoyl phosphate + L-aspartate = N-carbamoyl-L-aspartate + phosphate + H(+). Its pathway is pyrimidine metabolism; UMP biosynthesis via de novo pathway; (S)-dihydroorotate from bicarbonate: step 2/3. In terms of biological role, catalyzes the condensation of carbamoyl phosphate and aspartate to form carbamoyl aspartate and inorganic phosphate, the committed step in the de novo pyrimidine nucleotide biosynthesis pathway. This is Aspartate carbamoyltransferase catalytic subunit from Legionella pneumophila (strain Lens).